Reading from the N-terminus, the 479-residue chain is U6 small nuclear RNA (adenine-(43)-N(6))-methyltransferase (479 aa).

Residues K82, G108, D131, T164, and N184 each contribute to the S-adenosyl-L-methionine site. The segment at 420–424 is involved in dlc-1 binding; sequence DNASQ.

Belongs to the methyltransferase superfamily. METTL16/RlmF family. In terms of assembly, self-associates. Interacts with dlc-1; the interaction is direct, and is required for nuclear localization of mett-10. Expressed in the intestine, vulva, and cells of the somatic gonad including distal tip cells, gonadal sheath cells and spermatheca.

The protein resides in the nucleus. It carries out the reaction an adenosine in mRNA + S-adenosyl-L-methionine = an N(6)-methyladenosine in mRNA + S-adenosyl-L-homocysteine + H(+). The catalysed reaction is adenosine in U6 snRNA + S-adenosyl-L-methionine = N(6)-methyladenosine in U6 snRNA + S-adenosyl-L-homocysteine + H(+). In terms of biological role, RNA N6-methyltransferase that methylates adenosine residues at the N(6) position of a subset of RNAs and is involved in S-adenosyl-L-methionine homeostasis by regulating splicing of S-adenosylmethionine synthase transcripts (sams-3, sams-4 and sams-5). Able to N6-methylate a subset of mRNAs containing the 5'UACAGAAAC-3' nonamer sequence. Plays a key role in S-adenosyl-L-methionine homeostasis: under rich-diet conditions, catalyzes N6-methylation of S-adenosylmethionine synthase mRNAs (sams-3, sams-4 and sams-5), directly inhibiting splicing and protein production of S-adenosylmethionine synthase. In addition to mRNAs, also able to mediate N6-methylation of U6 small nuclear RNA (U6 snRNA). Required for gamete production, inhibiting germ cell proliferative fate and ensuring germ cell meiotic development. Also promotes progression of the mitotic cell cycle in those germ cells that continue to proliferate. Plays a role in the development of the vulva, somatic gonad and embryo. This chain is U6 small nuclear RNA (adenine-(43)-N(6))-methyltransferase, found in Caenorhabditis elegans.